Consider the following 200-residue polypeptide: Somatotropin (200 aa).

The N-terminal stretch at 1 to 22 is a signal peptide; that stretch reads MARVLVLLSVVVASLLFSQGAT. Residue H38 coordinates Zn(2+). C71 and C173 are disulfide-bonded. Residue E182 participates in Zn(2+) binding. C190 and C198 are joined by a disulfide.

Belongs to the somatotropin/prolactin family.

The protein localises to the secreted. Growth hormone plays an important role in growth control and is involved in the regulation of several anabolic processes. Implicated as an osmoregulatory substance important for seawater adaptation. The sequence is that of Somatotropin (gh) from Ictalurus punctatus (Channel catfish).